We begin with the raw amino-acid sequence, 343 residues long: N-acetyl-gamma-glutamyl-phosphate reductase (343 aa).

Cys147 is a catalytic residue.

It belongs to the NAGSA dehydrogenase family. Type 1 subfamily.

It is found in the cytoplasm. The catalysed reaction is N-acetyl-L-glutamate 5-semialdehyde + phosphate + NADP(+) = N-acetyl-L-glutamyl 5-phosphate + NADPH + H(+). Its pathway is amino-acid biosynthesis; L-arginine biosynthesis; N(2)-acetyl-L-ornithine from L-glutamate: step 3/4. Its function is as follows. Catalyzes the NADPH-dependent reduction of N-acetyl-5-glutamyl phosphate to yield N-acetyl-L-glutamate 5-semialdehyde. This chain is N-acetyl-gamma-glutamyl-phosphate reductase, found in Staphylococcus aureus (strain Mu3 / ATCC 700698).